The sequence spans 401 residues: Tryptophan synthase beta chain (401 aa).

Lys92 carries the N6-(pyridoxal phosphate)lysine modification.

Belongs to the TrpB family. As to quaternary structure, tetramer of two alpha and two beta chains. Pyridoxal 5'-phosphate is required as a cofactor.

The catalysed reaction is (1S,2R)-1-C-(indol-3-yl)glycerol 3-phosphate + L-serine = D-glyceraldehyde 3-phosphate + L-tryptophan + H2O. It participates in amino-acid biosynthesis; L-tryptophan biosynthesis; L-tryptophan from chorismate: step 5/5. Functionally, the beta subunit is responsible for the synthesis of L-tryptophan from indole and L-serine. The protein is Tryptophan synthase beta chain of Ruthia magnifica subsp. Calyptogena magnifica.